A 135-amino-acid polypeptide reads, in one-letter code: MVKIRLKRTGRKKLPIYQIVAADARSPRDGKFLEVIGHYQPTAKPHAVTIKKDRVAYWMQTGAQPTDTVRSLIRSTGLLYEMRLKKMGRSEEEIVSEMEKWQARQTERRQKRLVVKSRRRQAKKEAEGKAAGAEA.

Residues T106–A135 are disordered. A compositionally biased stretch (basic residues) spans R109–A122.

The protein belongs to the bacterial ribosomal protein bS16 family.

The chain is Small ribosomal subunit protein bS16 from Chlorobium phaeobacteroides (strain DSM 266 / SMG 266 / 2430).